Reading from the N-terminus, the 810-residue chain is Chloride channel protein (810 aa).

The Cytoplasmic segment spans residues 2 to 48 (SHEKNEASGNPEAQSWKAQEAMLGVKTEVSRWRAVKNCLYRHLVKVL). 2 consecutive transmembrane segments (helical) span residues 49–86 (GEDW…LFAM) and 93–116 (LQYL…CQIV). Residues 122-126 (GSGIP) carry the Selectivity filter part_1 motif. A chloride-binding site is contributed by Ser-123. Positions 125 to 132 (IPELKTII) form an intramembrane region, helical. Transmembrane regions (helical) follow at residues 141–160 (LTLR…LSAG) and 166–184 (EGPF…NQLL). A Selectivity filter part_2 motif is present at residues 164–168 (GKEGP). 2 consecutive intramembrane regions (helical) follow at residues 201-213 (ILTV…ISCC) and 217-225 (PLAGVLFSI). A run of 3 helical transmembrane segments spans residues 237–254 (YWRG…FRVL), 283–311 (LPAF…IVFM), and 320–339 (ILKK…LATL). N-linked (GlcNAc...) asparagine glycosylation occurs at Asn-365. Helical transmembrane passes span 389–408 (NIFI…AALA) and 416–439 (GAFV…MALL). The Selectivity filter part_3 signature appears at 416–420 (GAFVP). Phe-418 provides a ligand contact to chloride. The segment at residues 456 to 470 (GEYAVIGAAAMTGAV) is an intramembrane region (helical). Positions 471–472 (TH) form an intramembrane region, note=Loop between two helices. Residues 473-484 (AVSTAVICFELT) constitute an intramembrane region (helical). An intramembrane region (note=Loop between two helices) is located at residues 485–489 (GQISH). Residues 490–506 (VLPMMVAVILANMVAQG) form a helical membrane-spanning segment. At 507-810 (LQPSLYDSII…RTATSNSSGK (304 aa)) the chain is on the cytoplasmic side. Tyr-512 is a binding site for chloride. Positions 543-601 (MVRDVTSIASTSTYGDLLHVLRQTKLKFFPFVDTPETNTLLGSIERTEVEGLLQRRISA) constitute a CBS 1 domain. Disordered stretches follow at residues 604-631 (RQPA…DVPG) and 658-688 (KVQT…KHKG). Residues 724 to 781 (IDQSPFQLVEGTSLQKTHTLFSLLGLDRAYVTSMGKLVGVVALAEIQAAIEGSYQKGF) enclose the CBS 2 domain.

The protein belongs to the chloride channel (TC 2.A.49) family. ClC-0 subfamily. As to quaternary structure, homodimer. Each subunit has channel activity ('Double barreled channel').

It localises to the membrane. Voltage-gated chloride channel. This channel is thought to ensure the high conductance of the non-innervated membrane of the electrocyte necessary for efficient current generation caused by sodium influx through the acetylcholine receptor at the innervated membrane. In Tetronarce californica (Pacific electric ray), this protein is Chloride channel protein.